Reading from the N-terminus, the 415-residue chain is Exodeoxyribonuclease 7 large subunit (415 aa).

This sequence belongs to the XseA family. In terms of assembly, heterooligomer composed of large and small subunits.

Its subcellular location is the cytoplasm. The enzyme catalyses Exonucleolytic cleavage in either 5'- to 3'- or 3'- to 5'-direction to yield nucleoside 5'-phosphates.. Functionally, bidirectionally degrades single-stranded DNA into large acid-insoluble oligonucleotides, which are then degraded further into small acid-soluble oligonucleotides. This is Exodeoxyribonuclease 7 large subunit from Mycobacterium bovis (strain ATCC BAA-935 / AF2122/97).